Reading from the N-terminus, the 651-residue chain is Acetyl-coenzyme A synthetase (651 aa).

CoA contacts are provided by residues arginine 191–lysine 194, threonine 311, and asparagine 335. Residues glycine 387–proline 389, aspartate 411–threonine 416, aspartate 500, and arginine 515 contribute to the ATP site. Serine 523 is a binding site for CoA. Arginine 526 provides a ligand contact to ATP. Positions 537, 539, and 542 each coordinate Mg(2+). Residue arginine 584 coordinates CoA. The residue at position 609 (lysine 609) is an N6-acetyllysine.

This sequence belongs to the ATP-dependent AMP-binding enzyme family. The cofactor is Mg(2+). Acetylated. Deacetylation by the SIR2-homolog deacetylase activates the enzyme.

The catalysed reaction is acetate + ATP + CoA = acetyl-CoA + AMP + diphosphate. Functionally, catalyzes the conversion of acetate into acetyl-CoA (AcCoA), an essential intermediate at the junction of anabolic and catabolic pathways. AcsA undergoes a two-step reaction. In the first half reaction, AcsA combines acetate with ATP to form acetyl-adenylate (AcAMP) intermediate. In the second half reaction, it can then transfer the acetyl group from AcAMP to the sulfhydryl group of CoA, forming the product AcCoA. The polypeptide is Acetyl-coenzyme A synthetase (Pseudomonas syringae pv. tomato (strain ATCC BAA-871 / DC3000)).